Reading from the N-terminus, the 76-residue chain is Large ribosomal subunit protein eL38 (76 aa).

The protein belongs to the eukaryotic ribosomal protein eL38 family.

This chain is Large ribosomal subunit protein eL38 (RpL38), found in Lysiphlebus testaceipes (Greenbugs aphid parastoid).